The chain runs to 1168 residues: Transcription-repair-coupling factor (1168 aa).

The Helicase ATP-binding domain maps to 633–794; that stretch reads DMQKSRPMDR…MLGVRDLSVI (162 aa). 646–653 is a binding site for ATP; that stretch reads GDVGYGKT. A DEEQ box motif is present at residues 747–750; it reads DEEQ. In terms of domain architecture, Helicase C-terminal spans 808–969; sequence VLEQNMSFIK…GFKIAMRDLN (162 aa).

In the N-terminal section; belongs to the UvrB family. This sequence in the C-terminal section; belongs to the helicase family. RecG subfamily.

It is found in the cytoplasm. Its function is as follows. Couples transcription and DNA repair by recognizing RNA polymerase (RNAP) stalled at DNA lesions. Mediates ATP-dependent release of RNAP and its truncated transcript from the DNA, and recruitment of nucleotide excision repair machinery to the damaged site. The protein is Transcription-repair-coupling factor of Staphylococcus aureus (strain MSSA476).